A 1956-amino-acid chain; its full sequence is Sodium channel protein type 10 subunit alpha (1956 aa).

Residues 1–125 (MEFPIGSLET…FNLIRRTAIK (125 aa)) lie on the Cytoplasmic side of the membrane. Residues 27–54 (QIAAKQGTKKAREKHREQKDQEEKPRPQ) form a disordered region. A compositionally biased stretch (basic and acidic residues) spans 40-54 (KHREQKDQEEKPRPQ). One copy of the I repeat lies at 116-405 (FNLIRRTAIK…VTMAYEEQNQ (290 aa)). Residues 126–149 (VSVHSWFSLFITVTILVNCVCMTR) form a helical membrane-spanning segment. Residues 150-154 (TDLPE) are Extracellular-facing. Residues 155 to 174 (KIEYVFTVIYTFEALIKILA) form a helical membrane-spanning segment. Over 175–187 (RGFCLNEFTYLRD) the chain is Cytoplasmic. A helical transmembrane segment spans residues 188 to 206 (PWNWLDFSVITLAYVGTAI). The Extracellular segment spans residues 207-212 (DLRGIS). Residues 213-232 (GLRTFRVLRALKTVSVIPGL) form a helical; Voltage-sensor membrane-spanning segment. Topologically, residues 233–248 (KVIVGALIHSVKKLAD) are cytoplasmic. A helical membrane pass occupies residues 249–272 (VTILTIFCLSVFALVGLQLFKGNL). Residues 273 to 341 (KNKCVKNDMA…PDFNYTSFDS (69 aa)) are Extracellular-facing. A disulfide bridge connects residues cysteine 276 and cysteine 319. N-linked (GlcNAc...) asparagine glycosylation is found at asparagine 284, asparagine 288, asparagine 312, and asparagine 335. The segment at residues 342 to 366 (FAWAFLSLFRLMTQDSWERLYQQTL) is an intramembrane region (pore-forming). The Extracellular segment spans residues 367–373 (RTSGKIY). The chain crosses the membrane as a helical span at residues 374–399 (MIFFVLVIFLGSFYLVNLILAVVTMA). At 400–659 (YEEQNQATTD…MWVKLKTILF (260 aa)) the chain is on the cytoplasmic side. Residues serine 441, serine 444, serine 467, and serine 479 each carry the phosphoserine modification. Polar residues predominate over residues 443-454 (HSHNGSPLTSKN). Disordered stretches follow at residues 443 to 485 (HSHN…YNQR) and 500 to 580 (SHGS…LAPG). A compositionally biased stretch (basic and acidic residues) spans 561-570 (DSRHGEDEHQ). Serine 612 and serine 615 each carry phosphoserine. The stretch at 647-911 (CCPMWVKLKT…EDDGEVNNLQ (265 aa)) is one II repeat. Residues 660–684 (GLVTDPFAELTITLCIVVNTIFMAM) traverse the membrane as a helical segment. The Extracellular segment spans residues 685-695 (EHHGMSPTFEA). A helical transmembrane segment spans residues 696-719 (MLQIGNIVFTIFFTAEMVFKIIAF). Over 720-727 (DPYYYFQK) the chain is Cytoplasmic. Residues 728–747 (KWNIFDCIIVTVSLLELGVA) form a helical membrane-spanning segment. The Extracellular segment spans residues 748 to 753 (KKGSLS). A helical; Voltage-sensor membrane pass occupies residues 754-773 (VLRSFRLLRVFKLAKSWPTL). Topologically, residues 774–789 (NTLIKIIGNSVGALGN) are cytoplasmic. Residues 790 to 810 (LTIILAIIVFVFALVGKQLLG) traverse the membrane as a helical segment. Residues 811–834 (ENYRNNRKNISAPHEDWPRWHMHD) lie on the Extracellular side of the membrane. The N-linked (GlcNAc...) asparagine glycan is linked to asparagine 819. Positions 835–855 (FFHSFLIVFRILCGEWIENMW) form an intramembrane region, pore-forming. Residues 856–864 (ACMEVGQKS) are Extracellular-facing. Cysteines 857 and 866 form a disulfide. A helical membrane pass occupies residues 865-890 (ICLILFLTVMVLGNLVVLNLFIALLL). At 891-1147 (NSFSADNLTA…GWQVRKTCYR (257 aa)) the chain is on the cytoplasmic side. Disordered regions lie at residues 963 to 986 (AANTARGSSGGLQAPRGPRDEHSD) and 1041 to 1089 (DHLT…GSTV). One copy of the III repeat lies at 1140–1449 (QVRKTCYRIV…KKYYNAMKKL (310 aa)). A helical transmembrane segment spans residues 1148-1171 (IVEHSWFESFIIFMILLSSGSLAF). Residues 1172 to 1184 (EDYYLDQKPTVKA) are Extracellular-facing. Residues 1185 to 1210 (LLEYTDRVFTFIFVFEMLLKWVAYGF) form a helical membrane-spanning segment. Over 1211–1216 (KKYFTN) the chain is Cytoplasmic. The chain crosses the membrane as a helical span at residues 1217–1238 (AWCWLDFLIVNISLISLTAKIL). Over 1239-1242 (EYSE) the chain is Extracellular. Residues 1243-1264 (VAPIKALRTLRALRPLRALSRF) form a helical; Voltage-sensor membrane-spanning segment. Residues 1265-1283 (EGMRVVVDALVGAIPSIMN) are Cytoplasmic-facing. The helical transmembrane segment at 1284–1311 (VLLVCLIFWLIFSIMGVNLFAGKFWRCI) threads the bilayer. Residues asparagine 1312, asparagine 1328, and asparagine 1336 are each glycosylated (N-linked (GlcNAc...) asparagine). The Extracellular segment spans residues 1312–1353 (NYTDGEFSLVPLSIVNNKSDCKIQNSTGSFFWVNVKVNFDNV). Positions 1354 to 1375 (AMGYLALLQVATFKGWMDIMYA) form an intramembrane region, pore-forming. Over 1376–1391 (AVDSREVNMQPKWEDN) the chain is Extracellular. A helical membrane pass occupies residues 1392-1418 (VYMYLYFVIFIIFGGFFTLNLFVGVII). Over 1419–1471 (DNFNQQKKKLGGQDIFMTEEQKKYYNAMKKLGSKKPQKPIPRPLNKFQGFVFD) the chain is Cytoplasmic. Serine 1451 bears the Phosphoserine; by PKC mark. The stretch at 1458 to 1757 (IPRPLNKFQG…WEKFDPEATQ (300 aa)) is one IV repeat. A helical membrane pass occupies residues 1472–1495 (IVTRQAFDITIMVLICLNMITMMV). Over 1496–1506 (ETDDQSEEKTK) the chain is Extracellular. The helical transmembrane segment at 1507–1530 (ILGKINQFFVAVFTGECVMKMFAL) threads the bilayer. Residues 1531-1536 (RQYYFT) lie on the Cytoplasmic side of the membrane. The chain crosses the membrane as a helical span at residues 1537–1560 (NGWNVFDFIVVVLSIASLIFSAIL). Topologically, residues 1561–1572 (KSLQSYFSPTLF) are extracellular. Residues 1573–1594 (RVIRLARIGRILRLIRAAKGIR) form a helical; Voltage-sensor membrane-spanning segment. Residues 1595-1609 (TLLFALMMSLPALFN) lie on the Cytoplasmic side of the membrane. A helical transmembrane segment spans residues 1610-1632 (IGLLLFLVMFIYSIFGMSSFPHV). The Extracellular segment spans residues 1633-1646 (RWEAGIDDMFNFQT). Positions 1647 to 1669 (FANSMLCLFQITTSAGWDGLLSP) form an intramembrane region, pore-forming. Residues 1670 to 1697 (ILNTGPPYCDPNLPNSNGTRGDCGSPAV) are Extracellular-facing. Asparagine 1686 carries an N-linked (GlcNAc...) asparagine glycan. Residues 1698-1722 (GIIFFTTYIIISFLIMVNMYIAVIL) traverse the membrane as a helical segment. The Cytoplasmic portion of the chain corresponds to 1723–1956 (ENFNVATEES…TSMELIAPGP (234 aa)). Residues 1851-1880 (EDISATVIQKAYRSYVLHRSMALSNTPCVP) form the IQ domain. The tract at residues 1909–1956 (SETASATSFPPSYESVTRGLSDRVNMRTSSSIQNEDEATSMELIAPGP) is disordered.

Belongs to the sodium channel (TC 1.A.1.10) family. Nav1.8/SCN10A subfamily. The channel consists of an ion conducting pore forming alpha-subunit regulated by one or more associated auxiliary subunits SCN1B, SCN2B and SCN3B; electrophysiological properties may vary depending on the type of the associated beta subunits. Found in a number of complexes with PRX, DYNLT1 and PDZD2. Interacts with proteins such as FSTL1, PRX, DYNLT1, PDZD2, S100A10 and many others. Interacts with NEDD4 and NEDD4L. Post-translationally, ubiquitinated by NEDD4L; which promotes its endocytosis. Phosphorylation at Ser-1451 by PKC in a highly conserved cytoplasmic loop slows inactivation of the sodium channel and reduces peak sodium currents. In terms of processing, lacks the cysteine which covalently binds the conotoxin GVIIJ. This cysteine (position 816) is speculated in other sodium channel subunits alpha to be implied in covalent binding with the sodium channel subunit beta-2 or beta-4. Expressed in the dorsal root ganglia and sciatic nerve.

The protein localises to the cell membrane. It carries out the reaction Na(+)(in) = Na(+)(out). Tetrodotoxin-resistant channel that mediates the voltage-dependent sodium ion permeability of excitable membranes. Assuming opened or closed conformations in response to the voltage difference across the membrane, the protein forms a sodium-selective channel through which sodium ions may pass in accordance with their electrochemical gradient. Plays a role in neuropathic pain mechanisms. This is Sodium channel protein type 10 subunit alpha from Homo sapiens (Human).